The following is a 626-amino-acid chain: MSTDWKDLPVAPWLIDTMEQFGFTDMTPVQASVIPMFAGNKDVIVEAVTGSGKTIAFLVPLIQRMLNLLKEGPAVSGRVYSVVVSPTRELARQTYEVLQSILEMGCPEADASDKITLEKKKKGKAAPTMPKKIRGQLIMGGDLPSHMDLKNFLRDKPQIIVATPGRLLELLRAPQIKTSAFDSLVLDEADRLLDLGFGRDITSIINILPKQRRTGLFSATITDAIQNLVKIGLRNPVKIVVKVGGKKEQKTPLSLGLSYVVLEPREKLAYALNLLSIYPYRKAIVYLPTCAAVTYYQQMFSHLNEGREEPYEIYGLHGKLPSSTRIKILNKYQKTGAQAILMTTDIAARGLDIPEVDLVVQLDPPSDADTFQHRCGRAGRAGRQGQAIVLLHKGREEEYVDLMRVRKVKLRPYTGPGSELEGEKLDQEATELYTKLRKWVLEDRQRHDQALLSFVSFVRFYSKHVAQSIFRIQSLDLPGLAASYGLLRLPKMPELRTKDNERPENTWLGEVIDFDTYSYKNPAKEEARLKELEAHKEAMKNKVKIHKTKNDVQKANRAWSSTLQKKEEKSERHQKKQTRINEKIKRDFEEAKDLKQEESKEVVNDWKDMVKKSKKRKVDLPTFDDL.

A Q motif motif is present at residues 3-31 (TDWKDLPVAPWLIDTMEQFGFTDMTPVQA). In terms of domain architecture, Helicase ATP-binding spans 34–239 (IPMFAGNKDV…KIGLRNPVKI (206 aa)). 47 to 54 (AVTGSGKT) is a binding site for ATP. Positions 187 to 190 (DEAD) match the DEAD box motif. In terms of domain architecture, Helicase C-terminal spans 273-437 (NLLSIYPYRK…EATELYTKLR (165 aa)). A coiled-coil region spans residues 523–604 (AKEEARLKEL…KQEESKEVVN (82 aa)). Positions 549–626 (KNDVQKANRA…KVDLPTFDDL (78 aa)) are disordered. Residues 579-611 (RINEKIKRDFEEAKDLKQEESKEVVNDWKDMVK) are compositionally biased toward basic and acidic residues.

This sequence belongs to the DEAD box helicase family. DDX55/SPB4 subfamily.

The protein localises to the nucleus. It localises to the nucleolus. In terms of biological role, ATP-binding RNA helicase involved in the biogenesis of 60S ribosomal subunits. Required for the normal formation of 18S rRNA through the processing of pre-rRNAs at sites A0, A1 and A2, and the normal formation of 25S and 5.8S rRNAs through the processing of pre-rRNAs at sites C1 and C2. The protein is ATP-dependent rRNA helicase SPB4 (SPB4) of Yarrowia lipolytica (strain CLIB 122 / E 150) (Yeast).